Consider the following 215-residue polypeptide: Ras-related protein Rab-14 (215 aa).

At Ala-2 the chain carries N-acetylalanine. GTP is bound by residues Gly-21, Val-22, Gly-23, Lys-24, Ser-25, Cys-26, Ala-38, Asp-39, Cys-40, His-42, and Thr-43. Ser-25 lines the Mg(2+) pocket. The Switch 1 signature appears at 42–47 (HTIGVE). Mg(2+) contacts are provided by Thr-43 and Asp-66. The short motif at 68-77 (AGQERFRAVT) is the Switch 2 element. GTP-binding residues include Gly-69, Asn-124, Lys-125, Asp-127, Ala-155, and Lys-156. The disordered stretch occupies residues 188–215 (SGVQHKPSAPQGGRLTSEPQPQREGCGC). 2 S-geranylgeranyl cysteine lipidation sites follow: Cys-213 and Cys-215. Cys-215 carries the post-translational modification Cysteine methyl ester.

The protein belongs to the small GTPase superfamily. Rab family. Mg(2+) is required as a cofactor.

The protein localises to the recycling endosome. The protein resides in the early endosome membrane. It is found in the golgi apparatus membrane. It localises to the golgi apparatus. Its subcellular location is the trans-Golgi network membrane. The protein localises to the cytoplasmic vesicle. The protein resides in the phagosome. It carries out the reaction GTP + H2O = GDP + phosphate + H(+). Its activity is regulated as follows. Regulated by guanine nucleotide exchange factors (GEFs) including DENND6A and DENND6B which promote the exchange of bound GDP for free GTP. Regulated by GTPase activating proteins (GAPs) which increase the GTP hydrolysis activity. Inhibited by GDP dissociation inhibitors (GDIs) which prevent Rab-GDP dissociation. In terms of biological role, the small GTPases Rab are key regulators of intracellular membrane trafficking, from the formation of transport vesicles to their fusion with membranes. Rabs cycle between an inactive GDP-bound form and an active GTP-bound form that is able to recruit to membranes different set of downstream effectors directly responsible for vesicle formation, movement, tethering and fusion. Involved in membrane trafficking between the Golgi complex and endosomes during early embryonic development. Regulates the Golgi to endosome transport of FGFR-containing vesicles during early development, a key process for developing basement membrane and epiblast and primitive endoderm lineages during early postimplantation development. May act by modulating the kinesin KIF16B-cargo association to endosomes. Regulates, together with its guanine nucleotide exchange factor DENND6A, the specific endocytic transport of ADAM10, N-cadherin/CDH2 shedding and cell-cell adhesion. Mediates endosomal tethering and fusion through the interaction with RUFY1 and RAB4B. Interaction with RAB11FIP1 may function in the process of neurite formation. The protein is Ras-related protein Rab-14 (RAB14) of Gallus gallus (Chicken).